The following is a 185-amino-acid chain: Bacteriocin UviA (185 aa).

May have a role in bacteriocin secretion or immunity. In Clostridium perfringens, this protein is Bacteriocin UviA (uviA).